The primary structure comprises 90 residues: Protein LIM3 (90 aa).

Residues M1–Q26 form the signal peptide. 4 disulfides stabilise this stretch: C28–C65, C38–C54, C55–C80, and C67–C87.

Belongs to the A9/FIL1 family.

The protein resides in the secreted. In Lilium longiflorum (Trumpet lily), this protein is Protein LIM3 (LIM3).